A 1012-amino-acid polypeptide reads, in one-letter code: ATP-dependent DNA helicase MPH1 (1012 aa).

The region spanning I94–N261 is the Helicase ATP-binding domain. ATP is bound at residue I107 to T114. Positions D209–H212 match the DEAH box motif. In terms of domain architecture, Helicase C-terminal spans K430–R654. The interval D493–Q555 is disordered. Residues R498–R510 show a composition bias toward basic residues. Over residues L511–S537 the composition is skewed to basic and acidic residues.

This sequence belongs to the DEAD box helicase family. DEAH subfamily. FANCM sub-subfamily. As to quaternary structure, interacts with the MHF histone-fold complex to form the FANCM-MHF complex.

It is found in the nucleus. The enzyme catalyses ATP + H2O = ADP + phosphate + H(+). In terms of biological role, ATP-dependent DNA helicase involved in DNA damage repair by homologous recombination and in genome maintenance. Capable of unwinding D-loops. Plays a role in limiting crossover recombinants during mitotic DNA double-strand break (DSB) repair. Component of a FANCM-MHF complex which promotes gene conversion at blocked replication forks, probably by reversal of the stalled fork. The sequence is that of ATP-dependent DNA helicase MPH1 from Vanderwaltozyma polyspora (strain ATCC 22028 / DSM 70294 / BCRC 21397 / CBS 2163 / NBRC 10782 / NRRL Y-8283 / UCD 57-17) (Kluyveromyces polysporus).